Reading from the N-terminus, the 155-residue chain is Putative methyl-CpG-binding domain protein 12 (155 aa).

Residues 1-53 (MVQCTDCKKWRLIPSMQHYNIIKETQLQTPFVCGTTSGWTPNMSCNVPQDGTT) form a CW-type zinc finger. Positions 3–45 (QCTDCKKWRLIPSMQHYNIIKETQLQTPFVCGTTSGWTPNMSC) match the MBD-associated domain (MAD) motif. The Zn(2+) site is built by Cys-4, Cys-7, Cys-33, and Cys-45. The MBD domain occupies 53 to 126 (TCDTWPSIPP…SQFSFQIPKP (74 aa)). Residues 130-155 (NYVKKRTRPVKRRKSSKDNNCEKGKK) are disordered. A compositionally biased stretch (basic residues) spans 133-144 (KKRTRPVKRRKS). The Nuclear localization signal signature appears at 140-147 (KRRKSSKD). The span at 145–155 (SKDNNCEKGKK) shows a compositional bias: basic and acidic residues.

It is found in the nucleus. Functionally, probable transcriptional regulator. In Arabidopsis thaliana (Mouse-ear cress), this protein is Putative methyl-CpG-binding domain protein 12 (MBD12).